The chain runs to 552 residues: Thermosome subunit beta (552 aa).

It belongs to the TCP-1 chaperonin family. As to quaternary structure, forms a Heterooligomeric complex of two stacked nine-membered rings; one of alpha and the other of beta subunits. The N-terminus is blocked.

Functionally, molecular chaperone; binds unfolded polypeptides in vitro, and has a weak ATPase activity. The polypeptide is Thermosome subunit beta (thsB) (Sulfurisphaera tokodaii (strain DSM 16993 / JCM 10545 / NBRC 100140 / 7) (Sulfolobus tokodaii)).